Reading from the N-terminus, the 173-residue chain is ADP-ribose 1''-phosphate phosphatase (173 aa).

The region spanning 1–173 is the Macro domain; it reads MIRYIKGDLL…YDVEFNVYVI (173 aa). Substrate-binding positions include 7–9, 26–28, 33–38, and 145–151; these read GDL, ACN, WGGGIA, and INAGIFA.

Belongs to the POA1 family.

The catalysed reaction is ADP-alpha-D-ribose 1''-phosphate + H2O = ADP-D-ribose + phosphate. Highly specific phosphatase involved in the metabolism of ADP-ribose 1''-phosphate (Appr1p) which is produced as a consequence of tRNA splicing. The chain is ADP-ribose 1''-phosphate phosphatase (POA1) from Scheffersomyces stipitis (strain ATCC 58785 / CBS 6054 / NBRC 10063 / NRRL Y-11545) (Yeast).